The chain runs to 78 residues: Protein SlyX homolog (78 aa).

This sequence belongs to the SlyX family.

The chain is Protein SlyX homolog from Xylella fastidiosa (strain M23).